The primary structure comprises 52 residues: AASQHLCGSHLVEALFLVCGESGFFYNPNKSGIVEQCCLKPCTIYEMEKYCN.

Cystine bridges form between Cys-7–Cys-38, Cys-19–Cys-51, and Cys-37–Cys-42.

The protein belongs to the insulin family. Heterodimer of a B chain and an A chain linked by two disulfide bonds.

It localises to the secreted. Functionally, insulin decreases blood glucose concentration. It increases cell permeability to monosaccharides, amino acids and fatty acids. It accelerates glycolysis, the pentose phosphate cycle, and glycogen synthesis in liver. The sequence is that of Insulin (ins) from Amia calva (Bowfin).